The primary structure comprises 642 residues: Extracellular metalloproteinase 5 (642 aa).

Residues 1 to 19 (MHGLLLAAGLLSLPLHVLA) form the signal peptide. Positions 20–246 (HPQPSTTTSL…VHNVVDYVAH (227 aa)) are excised as a propeptide. Asn287 carries an N-linked (GlcNAc...) asparagine glycan. His430 provides a ligand contact to Zn(2+). Glu431 is a catalytic residue. His434 is a Zn(2+) binding site. Asn595 and Asn624 each carry an N-linked (GlcNAc...) asparagine glycan.

Belongs to the peptidase M36 family. Zn(2+) serves as cofactor.

It is found in the secreted. Functionally, secreted metalloproteinase that allows assimilation of proteinaceous substrates and probably acts as a virulence factor. This is Extracellular metalloproteinase 5 (MEP5) from Arthroderma gypseum (strain ATCC MYA-4604 / CBS 118893) (Microsporum gypseum).